Reading from the N-terminus, the 694-residue chain is MGKRFPSGWFSPRVHPPRRQRSPMTNQATPGTASVWNNIEGIGFGGDYNPEQWPVSVRLEDLELMQEAGVNFLSVGIFSWALLEPAEGQYDFGWLDDVMDNLHGIGVKVALATATAAPPAWLVRKHPEILPVTADGTTLGPGSRRHYTPSSAVYRKYAAGITRVLAERYKDHPALALWHVDNELGCHVSEFYGEEDAAAFRLWLERRYGTIDALNAAWGTAFWSQHYGSFEEILPPGVAPSTLNPGQQLDFQRFNSWALMDYYRSLVAVLREVTPAVPCTTNLMASSATKSMDYFSWAKDLDVIANDHYLVAADPERHIELAFSADLTRGIAGGDPWILMEHSTSAVNWQPRNQPKMPGEMLRNSLAHVARGADAVMFFQWRQSFAGSEKFHSAMVPHGGRDTRVWREVVDLGAALQLLAPVRGSRVESRAAIVFDYEAWWASEIDSKPSIDVRYLDLLRAFHRSLFLRGVSVDMVHPSASLDGYDLVLVCTLYSVTDEAAANIAAAAAGGATVLVSYFSGITDEKDHVRLGGYPGAFRELLGVRVEEFHPLLAGSQLKLSDGTVSSIWSEHVHLDGAEAFQTFTGYPLEGVPSLTRRAVGTGAAWYLATFPDRDGIESLVDRLLAESGVSPVAEADAGVELTRRRSADGGSFLFAINHTRAAASVRASGTDVLSGERFTGTVEAGSVAVIAED.

The segment at 1–31 is disordered; the sequence is MGKRFPSGWFSPRVHPPRRQRSPMTNQATPG. Positions 22-31 are enriched in polar residues; it reads SPMTNQATPG. 2 residues coordinate substrate: R144 and N182. The Proton donor role is filled by E183. The active-site Nucleophile is E341. Substrate contacts are provided by residues W349 and 389–392; that span reads EKFH.

This sequence belongs to the glycosyl hydrolase 42 family. In terms of assembly, homotrimer.

It catalyses the reaction Hydrolysis of terminal non-reducing beta-D-galactose residues in beta-D-galactosides.. With respect to regulation, strongly inhibited by glucose. No activity is lost during treatment with 100 mM EDTA after 2 hours. Activity not considerably affected by metal ions (5 mM), including Na(+), K(+), Mg(2+), Co(2+) and Ca(2+). Completely inhibited by Cu(2+) and Zn(2+) (5 mM) and is strongly inhibited by Mn(2+) (11%), Fe(2+) (25%) and Ni(2+) (38%) in comparison with the activity in the absence of cations (100%). Activity not affected by dithiothreitol, beta-mercaptoethanol and L-cysteine whereas reduced glutathione almost completely inactivates it. With ONPG as substrate, the addition of ethanol up to 20% still slightly stimulates activity. The activity increases up to 120% in the presence of 8% v/v ethanol at pH 5.5. Its function is as follows. Hydrolyzes p-nitrophenyl-beta-D-galactopyranoside (PNPG), o-nitrophenyl-beta-D-galactopyranoside (ONPG) and chromogen 5-bromo-4-chloro-3-indolyl-beta-D-galactopyranoside (X-gal), with highest activity against PNPG. Also acts on p-nitrophenyl-beta-D-glucopyranoside (PNPGlu) and o-nitrophenyl-beta-D-glucopyranoside (ONPGlu), but with significantly lower activity. The protein is Beta-galactosidase of Arthrobacter sp.